Here is a 73-residue protein sequence, read N- to C-terminus: uncharacterized protein (73 aa).

The protein belongs to the asfivirus I73R family.

Its subcellular location is the virion. This is an uncharacterized protein from Ornithodoros (relapsing fever ticks).